The primary structure comprises 800 residues: Nucleolar complex protein 3 homolog (800 aa).

The interval 37–90 (STIKKYRKEQRKLRQAVKDAVSKKPFPLEDPKSKRPVKGMEREEEDEEDQALPL) is disordered. A compositionally biased stretch (basic residues) spans 40-51 (KKYRKEQRKLRQ). Residues 52–77 (AVKDAVSKKPFPLEDPKSKRPVKGME) are compositionally biased toward basic and acidic residues. The span at 78-90 (REEEDEEDQALPL) shows a compositional bias: acidic residues. K333 is covalently cross-linked (Glycyl lysine isopeptide (Lys-Gly) (interchain with G-Cter in SUMO2)). Residues 450–489 (FKEKRKTLSRMQRKWKKAEEKLERELREAEASESTERKLK) are a coiled coil.

Belongs to the CBF/MAK21 family.

It is found in the nucleus. The protein resides in the nucleolus. This chain is Nucleolar complex protein 3 homolog (NOC3L), found in Cricetulus griseus (Chinese hamster).